A 210-amino-acid polypeptide reads, in one-letter code: Large ribosomal subunit protein uL3 (210 aa).

The tract at residues 125 to 151 (HGFGGGPRTHGQSDRLRAPGSIGAGTD) is disordered.

This sequence belongs to the universal ribosomal protein uL3 family. In terms of assembly, part of the 50S ribosomal subunit. Forms a cluster with proteins L14 and L19.

One of the primary rRNA binding proteins, it binds directly near the 3'-end of the 23S rRNA, where it nucleates assembly of the 50S subunit. The sequence is that of Large ribosomal subunit protein uL3 from Roseiflexus sp. (strain RS-1).